The sequence spans 350 residues: GDSL esterase/lipase At2g04570 (350 aa).

Residues Met1–Ala23 form the signal peptide. Ser35 functions as the Nucleophile in the catalytic mechanism. Residues Asn98 and Asn117 are each glycosylated (N-linked (GlcNAc...) asparagine). Catalysis depends on residues Asp325 and His328. Residue Asn343 is glycosylated (N-linked (GlcNAc...) asparagine).

Belongs to the 'GDSL' lipolytic enzyme family.

The protein localises to the secreted. The chain is GDSL esterase/lipase At2g04570 from Arabidopsis thaliana (Mouse-ear cress).